Consider the following 526-residue polypeptide: MVRLSYVRFGVAWCIAIIIVSGFSNAASDNFYTPKNGWRSSSAGDILAWRSIDASGIKANVDLTVAYQILYRTSQNSPKNPQHSVTTILVPKNSVKNKLVVVGEAQDSNNANSVPSVGFVSGSRDSPNLVVDESLLVPYLQAGYIVTVPDSEGPLNAFTAGRSGGYQTLDSIRATLSFDKLSLNKNTTVAGFGYSGGGQAISWAAALQQSYAPEIHVAGWAFGGFIPNVTALVHHADSSRASGYAASAITGLVDAYPDLEKASKSLLTSDGQDMLDFVRSNPITEVVSKYANVDVLGSKFFKRDGGLFLSKAYRDVARQNMQGTSQNEVPHVPQYVYHAESDEVVPYNSALQTVQYWCRHGAKVEFVTYTDDKLNHNNTQVTGSQPVFTFIQRLLNGKKVSWDACSFVKENTGPSASSSAGGPHVVPIPTGGHHTQSGSAHGGHSSEHAASSTHAPAGTGHNTSGTGPHASSKPSPSLHPSTGATSPAPSSHRETSGGAAGFGARVASRRRAAPPRTMPAPPLMER.

Positions 1-26 are cleaved as a signal peptide; it reads MVRLSYVRFGVAWCIAIIIVSGFSNA. An N-linked (GlcNAc...) asparagine glycan is attached at Asn-186. Catalysis depends on Ser-195, which acts as the Nucleophile. N-linked (GlcNAc...) asparagine glycosylation occurs at Asn-228. Residues Asp-342 and His-376 contribute to the active site. The N-linked (GlcNAc...) asparagine glycan is linked to Asn-377. The interval 412-526 is disordered; that stretch reads TGPSASSSAG…TMPAPPLMER (115 aa). Low complexity-rich tracts occupy residues 413–423 and 430–457; these read GPSASSSAGGP and TGGH…HAPA. A glycan (N-linked (GlcNAc...) asparagine) is linked at Asn-462. The segment covering 480–490 has biased composition (low complexity); that stretch reads PSTGATSPAPS. Pro residues predominate over residues 516–526; it reads RTMPAPPLMER.

It belongs to the AB hydrolase superfamily. Lipase family. Class Lip subfamily.

The protein resides in the secreted. It catalyses the reaction a triacylglycerol + H2O = a diacylglycerol + a fatty acid + H(+). It carries out the reaction a monoacylglycerol + H2O = glycerol + a fatty acid + H(+). The enzyme catalyses a diacylglycerol + H2O = a monoacylglycerol + a fatty acid + H(+). Its function is as follows. Secreted lipase that hydrolyzes acylglycerol lipids such as triacylglycerols and consequently releases free fatty acid. Can hydrolyze 4-nitrophenyl palmitate to release 4-nitrophenol and palmitoic acid. Due to an absence of fatty acid synthase genes in Malassezia species, secretory lipases are essential for the yeast to generate free fatty acids from degradation of sebum and assimilate them as lipid sources for growth. Plays important roles not only in lipid metabolism but also in the immune response of host cells and pathogenesis. The sequence is that of Secreted triacylglycerol lipase LIP4 from Malassezia furfur (Pityriasis versicolor infection agent).